The sequence spans 130 residues: Small ribosomal subunit protein uS11 (130 aa).

This sequence belongs to the universal ribosomal protein uS11 family. As to quaternary structure, part of the 30S ribosomal subunit. Interacts with proteins S7 and S18. Binds to IF-3.

Located on the platform of the 30S subunit, it bridges several disparate RNA helices of the 16S rRNA. Forms part of the Shine-Dalgarno cleft in the 70S ribosome. The sequence is that of Small ribosomal subunit protein uS11 from Campylobacter hominis (strain ATCC BAA-381 / DSM 21671 / CCUG 45161 / LMG 19568 / NCTC 13146 / CH001A).